The sequence spans 385 residues: Galactokinase (385 aa).

34 to 37 contacts substrate; sequence EHTD. Residue 124–130 coordinates ATP; the sequence is SSGLSSS. Ser130 and Glu162 together coordinate Mg(2+). Asp174 (proton acceptor) is an active-site residue. Tyr223 is a binding site for substrate.

It belongs to the GHMP kinase family. GalK subfamily.

Its subcellular location is the cytoplasm. It catalyses the reaction alpha-D-galactose + ATP = alpha-D-galactose 1-phosphate + ADP + H(+). Its pathway is carbohydrate metabolism; galactose metabolism. In terms of biological role, catalyzes the transfer of the gamma-phosphate of ATP to D-galactose to form alpha-D-galactose-1-phosphate (Gal-1-P). This Actinobacillus succinogenes (strain ATCC 55618 / DSM 22257 / CCUG 43843 / 130Z) protein is Galactokinase.